The sequence spans 394 residues: MAKAKFERTKPHVNIGTIGHVDHGKTSLTAAITIVLAKTGGAQATAYDQIDAAPEEKERGITISTAHVEYETKNRHYAHVDCPGHADYVKNMITGAAQMDGAILVVSAADGPMPQTREHILLAKQVGVPAMVVFLNKIDMVDDPDLLELVEMEVRELLSKYGFPGDEIPIIKGSALQALEGKPEGEKAINELMDAVDSYIPQPVRATDKPFLMPIEDVFSISGRGTVVTGRVESGIIKVGEEIEIVGLKDTQKTTCTGVEMFRKLLDEGQAGDNVGILLRGTKREEVERGQVLAKPGSIKPHDKFEAEVYVLSKEEGGRHTPFTNDYRPQFYFRTTDVTGTIKLPADKQWVMPGDNATFTVELIKPIAMQEGLKFSIREGGRTVGAGVVTKINN.

The tr-type G domain maps to K10–V204. A G1 region spans residues G19–T26. GTP is bound at residue G19–T26. A Mg(2+)-binding site is contributed by T26. The segment at G60–S64 is G2. The G3 stretch occupies residues D81–G84. GTP contacts are provided by residues D81 to H85 and N136 to D139. The interval N136 to D139 is G4. The interval S174–L176 is G5.

The protein belongs to the TRAFAC class translation factor GTPase superfamily. Classic translation factor GTPase family. EF-Tu/EF-1A subfamily. In terms of assembly, monomer.

Its subcellular location is the cytoplasm. It catalyses the reaction GTP + H2O = GDP + phosphate + H(+). In terms of biological role, GTP hydrolase that promotes the GTP-dependent binding of aminoacyl-tRNA to the A-site of ribosomes during protein biosynthesis. The chain is Elongation factor Tu from Rickettsia rickettsii.